Here is a 298-residue protein sequence, read N- to C-terminus: Inosose dehydratase (298 aa).

Belongs to the IolE/MocC family. Requires glutathione as cofactor. Co(2+) serves as cofactor. It depends on Mn(2+) as a cofactor.

The enzyme catalyses scyllo-inosose = 3D-3,5/4-trihydroxycyclohexane-1,2-dione + H2O. Functionally, catalyzes the dehydration of inosose (2-keto-myo-inositol, 2KMI or 2,4,6/3,5-pentahydroxycyclohexanone) to 3D-(3,5/4)-trihydroxycyclohexane-1,2-dione (D-2,3-diketo-4-deoxy-epi-inositol). In Histophilus somni (strain 129Pt) (Haemophilus somnus), this protein is Inosose dehydratase.